The following is a 68-amino-acid chain: Tabimmunregulin 1 (68 aa).

The first 26 residues, 1 to 26, serve as a signal peptide directing secretion; that stretch reads MLLKSYVFFLLSLLIVGLFTSRDADA. Positions 27–38 are excised as a propeptide; the sequence is QYEDLVTGYLRK.

In terms of tissue distribution, expressed in salivary glands.

The protein resides in the secreted. In terms of biological role, horsefly salivary gland immunosuppressant protein that likely inhibits the host inflammatory response by regulation of anti- and pro-inflammatory cytokines. When tested on mouse splenocytes in the presence of LPS, it increases the secretion of the proinflammatory cytokine interleukin-10 (IL10) and decreases the secretion of the proinflammatory cytokine interferon-gamma (IFNG) in a dose-dependent manner. The chain is Tabimmunregulin 1 from Tabanus yao (Horsefly).